A 173-amino-acid chain; its full sequence is uncharacterized protein (173 aa).

An N-acetyltransferase domain is found at 2-171 (VTVREAKLED…PDLSALKTLL (170 aa)).

This sequence belongs to the acetyltransferase family.

This is an uncharacterized protein from Bacillus subtilis (strain 168).